Consider the following 262-residue polypeptide: Ribose-5-phosphate isomerase A (262 aa).

Substrate contacts are provided by residues 33-36 (TGST), 89-92 (DGAD), and 102-105 (KGGG). Glu-111 acts as the Proton acceptor in catalysis. Lys-129 contacts substrate.

Belongs to the ribose 5-phosphate isomerase family. As to quaternary structure, homodimer.

It catalyses the reaction aldehydo-D-ribose 5-phosphate = D-ribulose 5-phosphate. The protein operates within carbohydrate degradation; pentose phosphate pathway; D-ribose 5-phosphate from D-ribulose 5-phosphate (non-oxidative stage): step 1/1. In terms of biological role, catalyzes the reversible conversion of ribose-5-phosphate to ribulose 5-phosphate. The polypeptide is Ribose-5-phosphate isomerase A (Roseobacter denitrificans (strain ATCC 33942 / OCh 114) (Erythrobacter sp. (strain OCh 114))).